Reading from the N-terminus, the 1380-residue chain is DNA-directed RNA polymerase subunit beta (1380 aa).

Belongs to the RNA polymerase beta chain family. In terms of assembly, the RNAP catalytic core consists of 2 alpha, 1 beta, 1 beta' and 1 omega subunit. When a sigma factor is associated with the core the holoenzyme is formed, which can initiate transcription.

The catalysed reaction is RNA(n) + a ribonucleoside 5'-triphosphate = RNA(n+1) + diphosphate. In terms of biological role, DNA-dependent RNA polymerase catalyzes the transcription of DNA into RNA using the four ribonucleoside triphosphates as substrates. The polypeptide is DNA-directed RNA polymerase subunit beta (Rhizobium meliloti (strain 1021) (Ensifer meliloti)).